Here is a 302-residue protein sequence, read N- to C-terminus: Probable alpha-L-glutamate ligase 1 (302 aa).

The 184-residue stretch at 104–287 (MQLLSRKGIG…VANMIIEFIE (184 aa)) folds into the ATP-grasp domain. Residues K141, 178–179 (EY), D187, and 211–213 (RSN) each bind ATP. Mg(2+) is bound by residues D248, E260, and N262. Residues D248, E260, and N262 each coordinate Mn(2+).

This sequence belongs to the RimK family. Mg(2+) serves as cofactor. It depends on Mn(2+) as a cofactor.

The chain is Probable alpha-L-glutamate ligase 1 from Pseudoalteromonas atlantica (strain T6c / ATCC BAA-1087).